Here is a 659-residue protein sequence, read N- to C-terminus: DNA ligase (659 aa).

Residues 32 to 36, 81 to 82, and Glu110 each bind NAD(+); these read DAEYD and SL. Residue Lys112 is the N6-AMP-lysine intermediate of the active site. Residues Arg133, Glu168, Lys284, and Lys308 each coordinate NAD(+). Zn(2+) contacts are provided by Cys402, Cys405, Cys420, and Cys425. Positions 582 to 659 constitute a BRCT domain; it reads AKPQIFAGKS…SEEEFAELLP (78 aa).

The protein belongs to the NAD-dependent DNA ligase family. LigA subfamily. Mg(2+) serves as cofactor. Requires Mn(2+) as cofactor.

It catalyses the reaction NAD(+) + (deoxyribonucleotide)n-3'-hydroxyl + 5'-phospho-(deoxyribonucleotide)m = (deoxyribonucleotide)n+m + AMP + beta-nicotinamide D-nucleotide.. DNA ligase that catalyzes the formation of phosphodiester linkages between 5'-phosphoryl and 3'-hydroxyl groups in double-stranded DNA using NAD as a coenzyme and as the energy source for the reaction. It is essential for DNA replication and repair of damaged DNA. The protein is DNA ligase of Desulfitobacterium hafniense (strain DSM 10664 / DCB-2).